The chain runs to 290 residues: Bifunctional protein FolD (290 aa).

Residues 169 to 171 (GAS), Ile194, and Ile235 contribute to the NADP(+) site.

Belongs to the tetrahydrofolate dehydrogenase/cyclohydrolase family. As to quaternary structure, homodimer.

The enzyme catalyses (6R)-5,10-methylene-5,6,7,8-tetrahydrofolate + NADP(+) = (6R)-5,10-methenyltetrahydrofolate + NADPH. The catalysed reaction is (6R)-5,10-methenyltetrahydrofolate + H2O = (6R)-10-formyltetrahydrofolate + H(+). It participates in one-carbon metabolism; tetrahydrofolate interconversion. Functionally, catalyzes the oxidation of 5,10-methylenetetrahydrofolate to 5,10-methenyltetrahydrofolate and then the hydrolysis of 5,10-methenyltetrahydrofolate to 10-formyltetrahydrofolate. In Helicobacter pylori (strain J99 / ATCC 700824) (Campylobacter pylori J99), this protein is Bifunctional protein FolD.